The following is a 394-amino-acid chain: uncharacterized protein (394 aa).

Residues 7–51 (RKVIPNMPDLILRKIFDQYDYPVLCKMERVCRRWTNIINSKFRKE) form the F-box domain.

This is an uncharacterized protein from Caenorhabditis elegans.